The sequence spans 611 residues: Nuclear cap-binding protein subunit 3 (611 aa).

The interval 1 to 44 (MAAVRGLRVSVKAGGGAEPEPMEVEEGEVEAAADRASPREVVSG) is disordered. Residues 20–31 (EPMEVEEGEVEA) show a composition bias toward acidic residues. Positions 108–169 (ETLYVYGVDD…LSSMPTNEKG (62 aa)) are RNA recognition motif (RRM) domain. The WLDD motif; essential for 7-methylguanosine-containing mRNA cap binding motif lies at 137-140 (WLDD). Disordered stretches follow at residues 159–230 (NLSS…PDTL), 338–360 (EEPI…DDRV), 373–393 (RERE…EMDY), 423–568 (KTIR…DSVL), and 583–611 (RQKK…DTDS). The span at 168–179 (KGQRKKDGEHSS) shows a compositional bias: basic and acidic residues. Acidic residues-rich tracts occupy residues 196–218 (DETE…DETE) and 339–358 (EPIE…DEDD). The span at 423–439 (KTIRNSMRSDSVGNSVK) shows a compositional bias: polar residues. The segment covering 446–463 (SHAEKPADVRLILEEKRQ) has biased composition (basic and acidic residues). The span at 464 to 475 (STASRQQSSSGK) shows a compositional bias: low complexity. Composition is skewed to basic and acidic residues over residues 501–511 (SRREPLSDVHS) and 544–556 (PKDK…KSEK). Residues 602–611 (ESSSGSDTDS) are compositionally biased toward low complexity.

It belongs to the NCBP3 family. In terms of assembly, component of an alternative cap-binding complex (CBC) composed of NCBP1/CBP80 and NCBP3.

It is found in the nucleus. The protein localises to the cytoplasm. Functionally, associates with NCBP1/CBP80 to form an alternative cap-binding complex (CBC) which plays a key role in mRNA export. NCBP3 serves as adapter protein linking the capped RNAs (m7GpppG-capped RNA) to NCBP1/CBP80. Unlike the conventional CBC with NCBP2 which binds both small nuclear RNA (snRNA) and messenger (mRNA) and is involved in their export from the nucleus, the alternative CBC with NCBP3 does not bind snRNA and associates only with mRNA thereby playing a role in only mRNA export. The sequence is that of Nuclear cap-binding protein subunit 3 from Xenopus tropicalis (Western clawed frog).